The following is a 64-amino-acid chain: Prokaryotic ubiquitin-like protein Pup (64 aa).

Positions 1-37 (MAQEQTKRGGGGGEDDDLTGSTAAGQERREKLTDETD) are disordered. Positions 21-58 (STAAGQERREKLTDETDDLLDEIDDVLEENAEDFVRAY) are ARC ATPase binding. Positions 23-52 (AAGQERREKLTDETDDLLDEIDDVLEENAE) form a coiled coil. Position 64 is a deamidated glutamine (Gln64). Residue Gln64 forms an Isoglutamyl lysine isopeptide (Gln-Lys) (interchain with K-? in acceptor proteins) linkage.

It belongs to the prokaryotic ubiquitin-like protein family. In terms of assembly, strongly interacts with the proteasome-associated ATPase ARC through a hydrophobic interface; the interacting region of Pup lies in its C-terminal half. There is one Pup binding site per ARC hexamer ring. Post-translationally, is modified by deamidation of its C-terminal glutamine to glutamate by the deamidase Dop, a prerequisite to the subsequent pupylation process.

It participates in protein degradation; proteasomal Pup-dependent pathway. Protein modifier that is covalently attached to lysine residues of substrate proteins, thereby targeting them for proteasomal degradation. The tagging system is termed pupylation. In Mycolicibacterium vanbaalenii (strain DSM 7251 / JCM 13017 / BCRC 16820 / KCTC 9966 / NRRL B-24157 / PYR-1) (Mycobacterium vanbaalenii), this protein is Prokaryotic ubiquitin-like protein Pup.